A 437-amino-acid chain; its full sequence is Protein translocase subunit SecY (437 aa).

10 consecutive transmembrane segments (helical) span residues 19–39 (LFTL…IPGV), 69–89 (LLQI…SIIL), 122–142 (VALA…GALF), 157–177 (IFTT…VMWL), 189–209 (GMSI…LWAI), 219–239 (WIEF…VVFV), 275–295 (GVIP…IVQF), 318–338 (HIIL…AISF), 378–398 (GSLY…GFGA), and 400–420 (QNFP…LETV).

This sequence belongs to the SecY/SEC61-alpha family. As to quaternary structure, component of the Sec protein translocase complex. Heterotrimer consisting of SecY, SecE and SecG subunits. The heterotrimers can form oligomers, although 1 heterotrimer is thought to be able to translocate proteins. Interacts with the ribosome. Interacts with SecDF, and other proteins may be involved. Interacts with SecA.

The protein localises to the cell membrane. Its function is as follows. The central subunit of the protein translocation channel SecYEG. Consists of two halves formed by TMs 1-5 and 6-10. These two domains form a lateral gate at the front which open onto the bilayer between TMs 2 and 7, and are clamped together by SecE at the back. The channel is closed by both a pore ring composed of hydrophobic SecY resides and a short helix (helix 2A) on the extracellular side of the membrane which forms a plug. The plug probably moves laterally to allow the channel to open. The ring and the pore may move independently. This Streptomyces coelicolor (strain ATCC BAA-471 / A3(2) / M145) protein is Protein translocase subunit SecY.